We begin with the raw amino-acid sequence, 133 residues long: Ribonuclease P protein component (133 aa).

This sequence belongs to the RnpA family. As to quaternary structure, consists of a catalytic RNA component (M1 or rnpB) and a protein subunit.

The enzyme catalyses Endonucleolytic cleavage of RNA, removing 5'-extranucleotides from tRNA precursor.. In terms of biological role, RNaseP catalyzes the removal of the 5'-leader sequence from pre-tRNA to produce the mature 5'-terminus. It can also cleave other RNA substrates such as 4.5S RNA. The protein component plays an auxiliary but essential role in vivo by binding to the 5'-leader sequence and broadening the substrate specificity of the ribozyme. The polypeptide is Ribonuclease P protein component (Pseudomonas entomophila (strain L48)).